A 67-amino-acid polypeptide reads, in one-letter code: Large ribosomal subunit protein bL35 (67 aa).

Belongs to the bacterial ribosomal protein bL35 family.

The polypeptide is Large ribosomal subunit protein bL35 (Methylorubrum populi (strain ATCC BAA-705 / NCIMB 13946 / BJ001) (Methylobacterium populi)).